An 860-amino-acid chain; its full sequence is Protein translocase subunit SecA (860 aa).

ATP is bound by residues Q87, 105-109 (GEGKT), and D514. Zn(2+) is bound by residues C846, C848, C857, and C858.

This sequence belongs to the SecA family. As to quaternary structure, monomer and homodimer. Part of the essential Sec protein translocation apparatus which comprises SecA, SecYEG and auxiliary proteins SecDF. Other proteins may also be involved. Requires Zn(2+) as cofactor.

The protein localises to the cell membrane. The protein resides in the cytoplasm. It carries out the reaction ATP + H2O + cellular proteinSide 1 = ADP + phosphate + cellular proteinSide 2.. In terms of biological role, part of the Sec protein translocase complex. Interacts with the SecYEG preprotein conducting channel. Has a central role in coupling the hydrolysis of ATP to the transfer of proteins into and across the cell membrane, serving as an ATP-driven molecular motor driving the stepwise translocation of polypeptide chains across the membrane. This is Protein translocase subunit SecA from Endomicrobium trichonymphae.